A 403-amino-acid chain; its full sequence is D-mannonate dehydratase (403 aa).

The substrate site is built by Asn38 and His123. Tyr160 (proton donor/acceptor) is an active-site residue. Asp211 is a Mg(2+) binding site. Residue His213 is the Proton donor/acceptor of the active site. Residues Glu237 and Glu263 each contribute to the Mg(2+) site. 5 residues coordinate substrate: Glu263, Arg284, His313, Asp317, and Glu340.

It belongs to the mandelate racemase/muconate lactonizing enzyme family. GalD subfamily. The cofactor is Mg(2+).

It catalyses the reaction D-mannonate = 2-dehydro-3-deoxy-D-gluconate + H2O. Its pathway is carbohydrate metabolism; pentose and glucuronate interconversion. In terms of biological role, catalyzes the dehydration of D-mannonate. Has no detectable activity with a panel of 70 other acid sugars (in vitro). The polypeptide is D-mannonate dehydratase (Sphingomonas sp. (strain SKA58)).